Here is a 159-residue protein sequence, read N- to C-terminus: Cytochrome c-type biogenesis protein CcmE (159 aa).

Residues 1-8 lie on the Cytoplasmic side of the membrane; the sequence is MNIRRKNR. The chain crosses the membrane as a helical; Signal-anchor for type II membrane protein span at residues 9–29; it reads LWIACAVLAGLALTIGLVLYA. The Periplasmic segment spans residues 30–159; sequence LRSNIDLFYT…PASVYKDPAS (130 aa). Residues His-130 and Tyr-134 each coordinate heme. The span at 132–147 shows a compositional bias: basic and acidic residues; sequence ENYTPPEVEKAMEANH. Positions 132–159 are disordered; the sequence is ENYTPPEVEKAMEANHRRPASVYKDPAS.

This sequence belongs to the CcmE/CycJ family.

Its subcellular location is the cell inner membrane. Functionally, heme chaperone required for the biogenesis of c-type cytochromes. Transiently binds heme delivered by CcmC and transfers the heme to apo-cytochromes in a process facilitated by CcmF and CcmH. The chain is Cytochrome c-type biogenesis protein CcmE from Escherichia coli (strain 55989 / EAEC).